The sequence spans 812 residues: Eukaryotic translation initiation factor 3 subunit C (812 aa).

The segment at 1-110 is disordered; it reads MSRFFSSNYE…EESDEEDGKK (110 aa). 2 stretches are compositionally biased toward acidic residues: residues 18 to 30 and 38 to 64; these read SEED…EEDL and SELD…DSDD. Residues S98, S99, and S103 each carry the phosphoserine modification. Residues 608–783 enclose the PCI domain; it reads YHQHINLDLI…TIFVVEKGDE (176 aa).

Belongs to the eIF-3 subunit C family. In terms of assembly, the eukaryotic translation initiation factor 3 (eIF-3) core complex is composed of TIF32, PRT1, NIP1, TIF34 and TIF35. A subcomplex of TIF32, NIP1 and PRT1 mediates the interaction with eIF-1, TIF5/eIF-5 and HCR1. The factors eIF-1, eIF-2, eIF-3, TIF5/eIF-5 and methionyl-tRNAi form a multifactor complex (MFC) that may bind to the 40S ribosome. TIF32, NIP1 and TIF5/eIF-5 comprise a minimal 40S-ribosome-binding unit. NIP1 interacts with TIF5/eIF-5 and SUI1.

The protein localises to the cytoplasm. Functionally, component of the eukaryotic translation initiation factor 3 (eIF-3) complex, which is involved in protein synthesis of a specialized repertoire of mRNAs and, together with other initiation factors, stimulates binding of mRNA and methionyl-tRNAi to the 40S ribosome. The eIF-3 complex specifically targets and initiates translation of a subset of mRNAs involved in cell proliferation. The polypeptide is Eukaryotic translation initiation factor 3 subunit C (Saccharomyces cerevisiae (strain ATCC 204508 / S288c) (Baker's yeast)).